Reading from the N-terminus, the 177-residue chain is MLRWFLSHLLGVWLLLSQLPREIPATDDKKLKACGRDYVRLQIEVCGSIWWGRKAGQLRERRQISEPLAEVVPSSIINDPEILSLMLQSIPGMPQELRIATRSGKEKLLRELHFVLEDSNLNLEEMKKTFLNTQFEAEDKSLSKLDKHPRKKRDNYIKMSDKCCNVGCTRRELASRC.

A signal peptide spans 1–25; the sequence is MLRWFLSHLLGVWLLLSQLPREIPA. 3 disulfides stabilise this stretch: C34-C164, C46-C177, and C163-C168. Residues 63–149 constitute a propeptide, connecting peptide; it reads QISEPLAEVV…KSLSKLDKHP (87 aa).

The protein belongs to the insulin family. Heterodimer of a B chain and an A chain linked by two disulfide bonds. Placenta; syncytiotrophoblast.

The protein resides in the secreted. Its function is as follows. Relaxin is an ovarian hormone that acts with estrogen to produce dilatation of the birth canal in many mammals. This is Prorelaxin (RLN) from Canis lupus familiaris (Dog).